Here is a 298-residue protein sequence, read N- to C-terminus: Glycine--tRNA ligase alpha subunit (298 aa).

It belongs to the class-II aminoacyl-tRNA synthetase family. In terms of assembly, tetramer of two alpha and two beta subunits.

The protein localises to the cytoplasm. It carries out the reaction tRNA(Gly) + glycine + ATP = glycyl-tRNA(Gly) + AMP + diphosphate. This is Glycine--tRNA ligase alpha subunit from Helicobacter pylori (strain G27).